The primary structure comprises 547 residues: Chaperonin GroEL (547 aa).

Residues T30 to P33, K51, D87 to T91, G415, and D496 each bind ATP. Positions S527–F547 are disordered. Over residues G537–F547 the composition is skewed to gly residues.

This sequence belongs to the chaperonin (HSP60) family. As to quaternary structure, forms a cylinder of 14 subunits composed of two heptameric rings stacked back-to-back. Interacts with the co-chaperonin GroES.

It is found in the cytoplasm. The enzyme catalyses ATP + H2O + a folded polypeptide = ADP + phosphate + an unfolded polypeptide.. Its function is as follows. Together with its co-chaperonin GroES, plays an essential role in assisting protein folding. The GroEL-GroES system forms a nano-cage that allows encapsulation of the non-native substrate proteins and provides a physical environment optimized to promote and accelerate protein folding. This Rickettsia rickettsii (strain Sheila Smith) protein is Chaperonin GroEL.